We begin with the raw amino-acid sequence, 626 residues long: ATP-dependent RNA helicase cyt-19, mitochondrial (626 aa).

The Q motif signature appears at 74-103; that stretch reads ADLAALGVHENVVRAITHGMGYENMTEVQS. Residues 106-297 enclose the Helicase ATP-binding domain; sequence ISPALKGKDI…RSYIDKNNFE (192 aa). 119-126 contributes to the ATP binding site; it reads AKTGTGKT. The short motif at 241 to 244 is the DEAD box element; it reads DEAD. In terms of domain architecture, Helicase C-terminal spans 329 to 493; that stretch reads AMLELIEKAL…CASVNAADSG (165 aa). The tract at residues 569–626 is disordered; it reads LRVETREHSMRPMGSGPGHRRDFNSRGPRRQSDDPFENALHRAQDLDRRPTRRQQASF. The tract at residues 578 to 626 is RNA-binding; it reads MRPMGSGPGHRRDFNSRGPRRQSDDPFENALHRAQDLDRRPTRRQQASF. Residues 607 to 617 are compositionally biased toward basic and acidic residues; sequence ALHRAQDLDRR.

This sequence belongs to the DEAD box helicase family.

The protein resides in the mitochondrion matrix. The enzyme catalyses ATP + H2O = ADP + phosphate + H(+). Its activity is regulated as follows. Activated by exposed helices in a group I intron RNA. Functionally, acts as an RNA chaperone to resolve non-native structures formed during RNA folding to promote mitochondrial group I, but also group II, intron splicing. Functions predominantly by disrupting accessible RNA secondary structure and depends on spontaneous openings in tightly packed RNAs to gain access to RNA helices. This is ATP-dependent RNA helicase cyt-19, mitochondrial from Neurospora crassa (strain ATCC 24698 / 74-OR23-1A / CBS 708.71 / DSM 1257 / FGSC 987).